Here is a 199-residue protein sequence, read N- to C-terminus: 7-methyl-GTP pyrophosphatase (199 aa).

D72 acts as the Proton acceptor in catalysis.

This sequence belongs to the Maf family. YceF subfamily. A divalent metal cation serves as cofactor.

The protein localises to the cytoplasm. It carries out the reaction N(7)-methyl-GTP + H2O = N(7)-methyl-GMP + diphosphate + H(+). Nucleoside triphosphate pyrophosphatase that hydrolyzes 7-methyl-GTP (m(7)GTP). May have a dual role in cell division arrest and in preventing the incorporation of modified nucleotides into cellular nucleic acids. This chain is 7-methyl-GTP pyrophosphatase, found in Alkalilimnicola ehrlichii (strain ATCC BAA-1101 / DSM 17681 / MLHE-1).